The primary structure comprises 338 residues: Lipoyl synthase (338 aa).

Residues 1–24 are disordered; sequence MTTVQEAVPNLIPTQDATPRPAPK. Residues C84, C89, C95, C110, C114, C117, and S324 each contribute to the [4Fe-4S] cluster site. The 218-residue stretch at 96–313 folds into the Radical SAM core domain; that stretch reads FSGGTATFMI…AEEGYKMGFK (218 aa).

It belongs to the radical SAM superfamily. Lipoyl synthase family. The cofactor is [4Fe-4S] cluster.

It is found in the cytoplasm. The enzyme catalyses [[Fe-S] cluster scaffold protein carrying a second [4Fe-4S](2+) cluster] + N(6)-octanoyl-L-lysyl-[protein] + 2 oxidized [2Fe-2S]-[ferredoxin] + 2 S-adenosyl-L-methionine + 4 H(+) = [[Fe-S] cluster scaffold protein] + N(6)-[(R)-dihydrolipoyl]-L-lysyl-[protein] + 4 Fe(3+) + 2 hydrogen sulfide + 2 5'-deoxyadenosine + 2 L-methionine + 2 reduced [2Fe-2S]-[ferredoxin]. It functions in the pathway protein modification; protein lipoylation via endogenous pathway; protein N(6)-(lipoyl)lysine from octanoyl-[acyl-carrier-protein]: step 2/2. In terms of biological role, catalyzes the radical-mediated insertion of two sulfur atoms into the C-6 and C-8 positions of the octanoyl moiety bound to the lipoyl domains of lipoate-dependent enzymes, thereby converting the octanoylated domains into lipoylated derivatives. The chain is Lipoyl synthase from Pseudomonas putida (strain ATCC 700007 / DSM 6899 / JCM 31910 / BCRC 17059 / LMG 24140 / F1).